A 180-amino-acid polypeptide reads, in one-letter code: Oligoribonuclease (180 aa).

Residues 7–170 form the Exonuclease domain; sequence LIWIDLEMTG…DDIRESLAEL (164 aa). Residue Tyr128 is part of the active site.

It belongs to the oligoribonuclease family.

The protein resides in the cytoplasm. Functionally, 3'-to-5' exoribonuclease specific for small oligoribonucleotides. The sequence is that of Oligoribonuclease from Pectobacterium atrosepticum (strain SCRI 1043 / ATCC BAA-672) (Erwinia carotovora subsp. atroseptica).